A 206-amino-acid chain; its full sequence is Na(+)-translocating NADH-quinone reductase subunit E (206 aa).

A run of 6 helical transmembrane segments spans residues 12 to 32 (AVFV…FLAV), 36 to 56 (ISSA…TVPV), 85 to 105 (FLGL…LEMF), 118 to 138 (GVFL…LFMV), 148 to 168 (VIYG…LAGI), and 184 to 204 (LGIT…FSGI).

Belongs to the NqrDE/RnfAE family. As to quaternary structure, composed of six subunits; NqrA, NqrB, NqrC, NqrD, NqrE and NqrF.

The protein resides in the cell inner membrane. It carries out the reaction a ubiquinone + n Na(+)(in) + NADH + H(+) = a ubiquinol + n Na(+)(out) + NAD(+). Its function is as follows. NQR complex catalyzes the reduction of ubiquinone-1 to ubiquinol by two successive reactions, coupled with the transport of Na(+) ions from the cytoplasm to the periplasm. NqrA to NqrE are probably involved in the second step, the conversion of ubisemiquinone to ubiquinol. In Chromohalobacter salexigens (strain ATCC BAA-138 / DSM 3043 / CIP 106854 / NCIMB 13768 / 1H11), this protein is Na(+)-translocating NADH-quinone reductase subunit E.